The chain runs to 879 residues: Fanconi anemia core complex-associated protein 100 (879 aa).

In terms of assembly, belongs to the multisubunit FA complex composed of FANCA, FANCB, FANCC, FANCE, FANCF, FANCG, FANCL/PHF9, FANCM, FAAP24 and FAAP100. Forms a subcomplex with FANCB and FANCL.

Its subcellular location is the nucleus. Functionally, plays a role in Fanconi anemia-associated DNA damage response network. Regulates FANCD2 monoubiquitination and the stability of the FA core complex. Induces chromosomal instability as well as hypersensitivity to DNA cross-linking agents, when repressed. The sequence is that of Fanconi anemia core complex-associated protein 100 from Mus musculus (Mouse).